Consider the following 147-residue polypeptide: 3-dehydroquinate dehydratase (147 aa).

Catalysis depends on Tyr-23, which acts as the Proton acceptor. Residues Asn-74, His-80, and Asp-87 each coordinate substrate. The Proton donor role is filled by His-100. Residues 101–102 (LS) and Arg-111 each bind substrate.

Belongs to the type-II 3-dehydroquinase family. In terms of assembly, homododecamer.

It catalyses the reaction 3-dehydroquinate = 3-dehydroshikimate + H2O. Its pathway is metabolic intermediate biosynthesis; chorismate biosynthesis; chorismate from D-erythrose 4-phosphate and phosphoenolpyruvate: step 3/7. Functionally, catalyzes a trans-dehydration via an enolate intermediate. The chain is 3-dehydroquinate dehydratase from Clostridium botulinum (strain Loch Maree / Type A3).